The following is a 91-amino-acid chain: MSITKERKQQLIKEYAITENDTGSSAVQCAILTERINNLTEHFKSNHKDHTSRRGLLVLVGRRRRLLNYIKKNSLSEYLDLISKLGIRKVK.

Belongs to the universal ribosomal protein uS15 family. Part of the 30S ribosomal subunit. Forms a bridge to the 50S subunit in the 70S ribosome, contacting the 23S rRNA.

One of the primary rRNA binding proteins, it binds directly to 16S rRNA where it helps nucleate assembly of the platform of the 30S subunit by binding and bridging several RNA helices of the 16S rRNA. Functionally, forms an intersubunit bridge (bridge B4) with the 23S rRNA of the 50S subunit in the ribosome. The polypeptide is Small ribosomal subunit protein uS15 (Rickettsia akari (strain Hartford)).